Reading from the N-terminus, the 164-residue chain is Phosphopantetheine adenylyltransferase (164 aa).

Ser10 serves as a coordination point for substrate. ATP-binding positions include 10-11 (SF) and His18. Substrate is bound by residues Lys42, Leu74, and Arg88. Residues 89–91 (GLR), Glu99, and 124–130 (YSFLSSS) each bind ATP.

The protein belongs to the bacterial CoaD family. In terms of assembly, homohexamer. Requires Mg(2+) as cofactor.

Its subcellular location is the cytoplasm. It carries out the reaction (R)-4'-phosphopantetheine + ATP + H(+) = 3'-dephospho-CoA + diphosphate. Its pathway is cofactor biosynthesis; coenzyme A biosynthesis; CoA from (R)-pantothenate: step 4/5. Its function is as follows. Reversibly transfers an adenylyl group from ATP to 4'-phosphopantetheine, yielding dephospho-CoA (dPCoA) and pyrophosphate. The sequence is that of Phosphopantetheine adenylyltransferase from Bacillus licheniformis (strain ATCC 14580 / DSM 13 / JCM 2505 / CCUG 7422 / NBRC 12200 / NCIMB 9375 / NCTC 10341 / NRRL NRS-1264 / Gibson 46).